A 414-amino-acid polypeptide reads, in one-letter code: MTQANLSETLFKPRFKHPETSTLVHRFNHGAQPPVQSALDGKTIPHWYRMINRLMWIWRGIDPREILDVQARIVMSDAERTDDDLYDTVIGYRGGNWIYEWATQAMVWQQKACAEEDPQLGGRHWLHAATLYNIAAYPHLKGDDLAEQAQALSNRAYEEAAQRLPGTMRQMEFTVPGGAPITGFLHMPKGDGPFPTVLMCGGLDAMQTDYYSLYERYFAPRGIAMLTIDMPSVGFSSKWKLTQDSSLLHQHVLKALPNVPWVDHTRVAAFGFRFGANVAVRLAYLESPRLKAVACLGPVVHTLLSDFKCQQQVPEMYLDVLASRLGMHDASDEALRVELNRYSLKVQGLLGRRCPTPMLSGYWKNDPFSLEEDSRLITSSSADGKLLEIPFNPVYRNFDKGLQEITDWIEKRLC.

This sequence belongs to the FrsA family.

It catalyses the reaction a carboxylic ester + H2O = an alcohol + a carboxylate + H(+). In terms of biological role, catalyzes the hydrolysis of esters. The chain is Esterase FrsA from Shigella dysenteriae serotype 1 (strain Sd197).